The chain runs to 955 residues: Glycine dehydrogenase (decarboxylating) (955 aa).

K705 is modified (N6-(pyridoxal phosphate)lysine).

The protein belongs to the GcvP family. The glycine cleavage system is composed of four proteins: P, T, L and H. Requires pyridoxal 5'-phosphate as cofactor.

It carries out the reaction N(6)-[(R)-lipoyl]-L-lysyl-[glycine-cleavage complex H protein] + glycine + H(+) = N(6)-[(R)-S(8)-aminomethyldihydrolipoyl]-L-lysyl-[glycine-cleavage complex H protein] + CO2. In terms of biological role, the glycine cleavage system catalyzes the degradation of glycine. The P protein binds the alpha-amino group of glycine through its pyridoxal phosphate cofactor; CO(2) is released and the remaining methylamine moiety is then transferred to the lipoamide cofactor of the H protein. In Aliivibrio fischeri (strain MJ11) (Vibrio fischeri), this protein is Glycine dehydrogenase (decarboxylating).